The primary structure comprises 88 residues: MKFFLLFLVVLPIMGVLGKKNGFAVDSNGKAPECFFDHYCNSECTKVYYAEKGYCCTLSCYCVGLDDDKKVLDISDTRKKLCDFTLFN.

Residues 1–18 (MKFFLLFLVVLPIMGVLG) form the signal peptide. Positions 20-83 (KNGFAVDSNG…ISDTRKKLCD (64 aa)) constitute an LCN-type CS-alpha/beta domain. 4 disulfides stabilise this stretch: Cys-34–Cys-55, Cys-40–Cys-60, Cys-44–Cys-62, and Cys-56–Cys-82.

Belongs to the long (4 C-C) scorpion toxin superfamily. Sodium channel inhibitor family. Beta subfamily. As to expression, expressed by the venom gland.

It localises to the secreted. Its function is as follows. Excitatory insect toxins induce a spastic paralysis. They bind voltage-independently at site-4 of sodium channels (Nav) and shift the voltage of activation toward more negative potentials thereby affecting sodium channel activation and promoting spontaneous and repetitive firing. In Leiurus hebraeus (Hebrew deathstalker scorpion), this protein is Beta-insect excitatory toxin LqhIT1d.